Here is a 506-residue protein sequence, read N- to C-terminus: Probable cytosol aminopeptidase (506 aa).

Mn(2+)-binding residues include lysine 278 and aspartate 283. Lysine 290 is a catalytic residue. Residues aspartate 301, aspartate 360, and glutamate 362 each contribute to the Mn(2+) site. Residue arginine 364 is part of the active site.

The protein belongs to the peptidase M17 family. It depends on Mn(2+) as a cofactor.

The protein localises to the cytoplasm. The enzyme catalyses Release of an N-terminal amino acid, Xaa-|-Yaa-, in which Xaa is preferably Leu, but may be other amino acids including Pro although not Arg or Lys, and Yaa may be Pro. Amino acid amides and methyl esters are also readily hydrolyzed, but rates on arylamides are exceedingly low.. It carries out the reaction Release of an N-terminal amino acid, preferentially leucine, but not glutamic or aspartic acids.. In terms of biological role, presumably involved in the processing and regular turnover of intracellular proteins. Catalyzes the removal of unsubstituted N-terminal amino acids from various peptides. This chain is Probable cytosol aminopeptidase, found in Ralstonia nicotianae (strain ATCC BAA-1114 / GMI1000) (Ralstonia solanacearum).